Reading from the N-terminus, the 530-residue chain is MDIKNSPSSLNSPSSYNFGQSILPLEHGPIYIPSSYVESHHEYPAMTFYSPAVMNYSIPSSVTNLEEGPGRQITSPNMLWSTPGHLSPLAVHHQLSHLYAEPQKSPWCEARSLEHTLPVSRETLKRKVSGNHCASPVTGPSSKRDAHFCAVCSDYASGYHYGVWSCEGCKAFFKRSIQGHNDYICPATNQCTIDKNRRKSCQACRLRKCYEVGMVKCGSRRERCGYRLVRRQGNAEEQLHCAGKAKRSGGHVPRVRELLLSALSPEQLVLTLLEAEPPHVLISRPSVPFTEASMMMSLTKLADEELVHMISWAKKIPGFVELSLLDQVRLLESCWLEVLMVGLMWRSIDHPGKLIFAPNLILDRDEGKCVEGILEVFDMLLATTSRFRELKLQHKEYLCVKAMVLLNSQYDPLVTATQDAESSQKLAHLLNAVTDALVWVIAKSGFSSQQQSVRLANLLMLLSHIRHASNKGMEHLLSMKCKNVVPVYDLLLEMMNAHVVRGCKSSITGSECSPAEDSKSTEGSQNPQSP.

Residues 1–148 are modulating; the sequence is MDIKNSPSSL…GPSSKRDAHF (148 aa). Ser61 is modified (phosphoserine; alternate). Residue Ser61 is glycosylated (O-linked (GlcNAc) serine; alternate). Phosphoserine; by MAPK occurs at positions 87 and 105. NR C4-type zinc fingers lie at residues 149 to 169 and 185 to 209; these read CAVC…CEGC and CPAT…LRKC. The segment at residues 149-214 is a DNA-binding region (nuclear receptor); that stretch reads CAVCSDYASG…RLRKCYEVGM (66 aa). Residues 264–498 enclose the NR LBD domain; sequence SPEQLVLTLL…DLLLEMMNAH (235 aa). Residues 507 to 530 are disordered; sequence ITGSECSPAEDSKSTEGSQNPQSP. A compositionally biased stretch (polar residues) spans 521 to 530; the sequence is TEGSQNPQSP.

The protein belongs to the nuclear hormone receptor family. NR3 subfamily. As to quaternary structure, binds DNA as a homodimer. Can form a heterodimer with ESR1. Interacts with NCOA1, NCOA3, NCOA5 and NCOA6 coactivators, leading to a strong increase of transcription of target genes. Interacts with UBE1C and AKAP13. Interacts with DNTTIP2. Interacts with CCDC62 in the presence of estradiol/E2; this interaction seems to enhance the transcription of target genes. Interacts with DNAAF4. Interacts with PRMT2. Interacts with CCAR2 (via N-terminus) in a ligand-independent manner. Interacts with RBM39, in the presence of estradiol (E2). Interacts with STUB1/CHIP. Post-translationally, phosphorylation at Ser-87 and Ser-105 recruits NCOA1.

The protein resides in the nucleus. In terms of biological role, nuclear hormone receptor. Binds estrogens with an affinity similar to that of ESR1/ER-alpha, and activates expression of reporter genes containing estrogen response elements (ERE) in an estrogen-dependent manner. This Callithrix jacchus (White-tufted-ear marmoset) protein is Estrogen receptor beta (ESR2).